Reading from the N-terminus, the 259-residue chain is Cobalt transport protein CbiM (259 aa).

Positions 1 to 25 (MFRRTTWLTLYLLLAMAALARPAFA) are cleaved as a signal peptide. 6 helical membrane-spanning segments follow: residues 31 to 51 (GFLPFNWAAFWFIVVLPFWIW), 68 to 88 (MLLGLAGAYTFVLSALKLPSV), 100 to 120 (LGAVLFGPAAMSILGGIVLLF), 132 to 152 (TLGANTFSMAVVGPFVAYGLY), 160 to 180 (GSMPLAVFLAATLGDLMTYVT), and 206 to 226 (IFAVTQLPLAISEGFLTVIVF).

It belongs to the CbiM family. As to quaternary structure, forms an energy-coupling factor (ECF) transporter complex composed of an ATP-binding protein (A component, CbiO), a transmembrane protein (T component, CbiQ) and 2 possible substrate-capture proteins (S components, CbiM and CbiN) of unknown stoichimetry.

It is found in the cell membrane. It functions in the pathway cofactor biosynthesis; adenosylcobalamin biosynthesis. Its function is as follows. Part of the energy-coupling factor (ECF) transporter complex CbiMNOQ involved in cobalt import. The sequence is that of Cobalt transport protein CbiM from Moorella thermoacetica (strain ATCC 39073 / JCM 9320).